The following is a 252-amino-acid chain: Enolase-phosphatase E1 (252 aa).

The Mg(2+) site is built by Asp14 and Glu16. Substrate is bound by residues Ser143–Ser144 and Lys177. Asp202 is a binding site for Mg(2+).

It belongs to the HAD-like hydrolase superfamily. MasA/MtnC family. Monomer. The cofactor is Mg(2+).

It is found in the cytoplasm. It localises to the nucleus. It catalyses the reaction 5-methylsulfanyl-2,3-dioxopentyl phosphate + H2O = 1,2-dihydroxy-5-(methylsulfanyl)pent-1-en-3-one + phosphate. It participates in amino-acid biosynthesis; L-methionine biosynthesis via salvage pathway; L-methionine from S-methyl-5-thio-alpha-D-ribose 1-phosphate: step 3/6. The protein operates within amino-acid biosynthesis; L-methionine biosynthesis via salvage pathway; L-methionine from S-methyl-5-thio-alpha-D-ribose 1-phosphate: step 4/6. Its function is as follows. Bifunctional enzyme that catalyzes the enolization of 2,3-diketo-5-methylthiopentyl-1-phosphate (DK-MTP-1-P) into the intermediate 2-hydroxy-3-keto-5-methylthiopentenyl-1-phosphate (HK-MTPenyl-1-P), which is then dephosphorylated to form the acireductone 1,2-dihydroxy-3-keto-5-methylthiopentene (DHK-MTPene). In Drosophila persimilis (Fruit fly), this protein is Enolase-phosphatase E1.